The chain runs to 445 residues: E3 ubiquitin-protein ligase MYLIP (445 aa).

An FERM domain is found at 1 to 279; the sequence is MLCYVTRPDA…ETHAFYRCDT (279 aa). Residues Cys-360, Cys-363, and Cys-368 each coordinate Fe cation. Residues 387-422 form an RING-type zinc finger; sequence CMVCCEEEINSTFCPCGHTVCCESCAAQLQSCPVCR. Residues 431–433 are critical for homodimerization; that stretch reads VYL.

In terms of assembly, homodimer. Interacts with the E2 ubiquitin-conjugating enzyme, UBE2D1 (via RING-type zinc finger). Interacts with myosin regulatory light chain (MRLC) and TMEM4. Autoubiquitinated. In terms of tissue distribution, ubiquitously expressed.

The protein localises to the cytoplasm. Its subcellular location is the cell membrane. The enzyme catalyses S-ubiquitinyl-[E2 ubiquitin-conjugating enzyme]-L-cysteine + [acceptor protein]-L-lysine = [E2 ubiquitin-conjugating enzyme]-L-cysteine + N(6)-ubiquitinyl-[acceptor protein]-L-lysine.. The protein operates within protein modification; protein ubiquitination. Can bind 1 iron ion per dimer. Iron binding seems to decrease LDLR degradation activity. In terms of biological role, E3 ubiquitin-protein ligase that mediates ubiquitination and subsequent proteasomal degradation of myosin regulatory light chain (MRLC), LDLR, VLDLR and LRP8. Activity depends on E2 enzymes of the UBE2D family. Proteasomal degradation of MRLC leads to inhibit neurite outgrowth in presence of NGF by counteracting the stabilization of MRLC by saposin-like protein (CNPY2/MSAP) and reducing CNPY2-stimulated neurite outgrowth. Acts as a sterol-dependent inhibitor of cellular cholesterol uptake by mediating ubiquitination and subsequent degradation of LDLR. This Homo sapiens (Human) protein is E3 ubiquitin-protein ligase MYLIP (MYLIP).